The chain runs to 1320 residues: Poly [ADP-ribose] polymerase tankyrase-1 (1320 aa).

Positions 1-15 are enriched in basic residues; sequence MAASRRSQHHHHHHQ. 2 disordered regions span residues 1-88 and 111-152; these read MAAS…DGAV and AGGG…AAGV. Residues 25 to 46 are compositionally biased toward pro residues; sequence SAPPPPPPPPLSPGLAPGPTPA. Residues 69–82 show a composition bias toward basic and acidic residues; sequence DGSRDPPDRPRSPD. Residues 120 to 152 show a composition bias toward low complexity; the sequence is NSASSASSPTSSSSSSPSSPGSSLAESPEAAGV. ANK repeat units follow at residues 174–202, 208–237, 241–270, 274–303, 361–390, 394–423, 427–456, 514–546, 550–579, 583–612, 676–705, 709–738, 742–771, 775–803, 829–858, 862–891, 895–924, and 928–957; these read GALR…NVNA, RKSS…NVHA, GGLI…DPNA, WNYT…DPNI, RKST…DVHA, GGLV…CVNA, WQFT…DPTL, SHET…NVNE, DFMT…KMNA, LGQT…DPSI, RHST…DVHA, GGLV…SVNV, WKFT…DPTK, DGNT…LLDA, RNST…DVNA, GGLI…CVNA, WAFT…DPTM, and EGQT…LPTC. An SAM domain is found at 1019–1082; sequence GLDMNISQFL…IKGVERLLGG (64 aa). Positions 1105 to 1310 constitute a PARP catalytic domain; it reads APEDKEYQSV…YQIMKPEAPS (206 aa). Residues Cys1227, His1230, Cys1235, and Cys1238 each coordinate Zn(2+).

It belongs to the ARTD/PARP family. Oligomerizes and associates with TNKS2. Interacts with the cytoplasmic domain of LNPEP/Otase in SLC2A4/GLUT4-vesicles. Binds to the N-terminus of telomeric TERF1 via the ANK repeats. Found in a complex with POT1; TERF1 and TINF2. Interacts with AXIN1. Interacts with AXIN2. Interacts with BLZF1 and CASC3. Interacts with NUMA1. In terms of processing, phosphorylated on serine residues by MAPK kinases upon insulin stimulation. Phosphorylated during mitosis. Post-translationally, ubiquitinated by RNF146 when auto-poly-ADP-ribosylated, leading to its degradation. ADP-ribosylated (-auto). Poly-ADP-ribosylated protein is recognized by RNF146, followed by ubiquitination.

Its subcellular location is the cytoplasm. It is found in the golgi apparatus membrane. It localises to the cytoskeleton. The protein resides in the microtubule organizing center. The protein localises to the centrosome. Its subcellular location is the nucleus. It is found in the nuclear pore complex. It localises to the chromosome. The protein resides in the telomere. The protein localises to the spindle pole. The catalysed reaction is NAD(+) + (ADP-D-ribosyl)n-acceptor = nicotinamide + (ADP-D-ribosyl)n+1-acceptor + H(+).. It catalyses the reaction L-aspartyl-[protein] + NAD(+) = 4-O-(ADP-D-ribosyl)-L-aspartyl-[protein] + nicotinamide. It carries out the reaction L-glutamyl-[protein] + NAD(+) = 5-O-(ADP-D-ribosyl)-L-glutamyl-[protein] + nicotinamide. Poly-ADP-ribosyltransferase involved in various processes such as Wnt signaling pathway, telomere length and vesicle trafficking. Acts as an activator of the Wnt signaling pathway by mediating poly-ADP-ribosylation (PARsylation) of AXIN1 and AXIN2, 2 key components of the beta-catenin destruction complex: poly-ADP-ribosylated target proteins are recognized by RNF146, which mediates their ubiquitination and subsequent degradation. Also mediates PARsylation of BLZF1 and CASC3, followed by recruitment of RNF146 and subsequent ubiquitination. Mediates PARsylation of TERF1, thereby contributing to the regulation of telomere length. Involved in centrosome maturation during prometaphase by mediating PARsylation of HEPACAM2/MIKI. May also regulate vesicle trafficking and modulate the subcellular distribution of SLC2A4/GLUT4-vesicles. May be involved in spindle pole assembly through PARsylation of NUMA1. Stimulates 26S proteasome activity. The polypeptide is Poly [ADP-ribose] polymerase tankyrase-1 (Tnks) (Mus musculus (Mouse)).